Consider the following 240-residue polypeptide: Pyridoxine 5'-phosphate synthase (240 aa).

Asn-6 lines the 3-amino-2-oxopropyl phosphate pocket. 8–9 (DH) provides a ligand contact to 1-deoxy-D-xylulose 5-phosphate. Arg-17 contributes to the 3-amino-2-oxopropyl phosphate binding site. The Proton acceptor role is filled by His-42. 1-deoxy-D-xylulose 5-phosphate is bound by residues Arg-44 and His-49. Glu-69 (proton acceptor) is an active-site residue. A 1-deoxy-D-xylulose 5-phosphate-binding site is contributed by Thr-99. The active-site Proton donor is the His-190. 3-amino-2-oxopropyl phosphate is bound by residues Gly-191 and 212–213 (GH).

The protein belongs to the PNP synthase family. As to quaternary structure, homooctamer; tetramer of dimers.

The protein localises to the cytoplasm. It carries out the reaction 3-amino-2-oxopropyl phosphate + 1-deoxy-D-xylulose 5-phosphate = pyridoxine 5'-phosphate + phosphate + 2 H2O + H(+). The protein operates within cofactor biosynthesis; pyridoxine 5'-phosphate biosynthesis; pyridoxine 5'-phosphate from D-erythrose 4-phosphate: step 5/5. In terms of biological role, catalyzes the complicated ring closure reaction between the two acyclic compounds 1-deoxy-D-xylulose-5-phosphate (DXP) and 3-amino-2-oxopropyl phosphate (1-amino-acetone-3-phosphate or AAP) to form pyridoxine 5'-phosphate (PNP) and inorganic phosphate. The protein is Pyridoxine 5'-phosphate synthase of Pseudomonas putida (strain ATCC 700007 / DSM 6899 / JCM 31910 / BCRC 17059 / LMG 24140 / F1).